Here is a 696-residue protein sequence, read N- to C-terminus: Transcriptional regulatory protein pro1 (696 aa).

Positions 1 to 48 (MSTQSPNHHEDITKTSSVNMTTTTTTTKTKAAAKAGTNAAPKQKTQMH) are disordered. Low complexity predominate over residues 21 to 40 (TTTTTTTKTKAAAKAGTNAA). The segment at residues 55–82 (CYTCRLRRKKCDEGSPMCTACKHLGLCC) is a DNA-binding region (zn(2)-C6 fungal-type). The segment at 112 to 145 (LSEKSSHTIQTSINTPPGLSHSLPTSATFSDPLD) is disordered. The segment covering 118 to 140 (HTIQTSINTPPGLSHSLPTSATF) has biased composition (polar residues).

Its subcellular location is the nucleus. Its function is as follows. May be involved in fruiting body development. The polypeptide is Transcriptional regulatory protein pro1 (adv-1) (Neurospora crassa (strain ATCC 24698 / 74-OR23-1A / CBS 708.71 / DSM 1257 / FGSC 987)).